Consider the following 1098-residue polypeptide: Transcription elongation regulator 1 (1098 aa).

Residues 1-15 (MAERGGDGGESERFN) show a composition bias toward basic and acidic residues. Residues 1-105 (MAERGGDGGE…RPPFMPPPMS (105 aa)) are disordered. Serine 11 is modified (phosphoserine). Omega-N-methylarginine is present on arginine 20. Asymmetric dimethylarginine occurs at positions 28, 30, 41, and 48. Positions 32–105 (PAPPPNAVMR…RPPFMPPPMS (74 aa)) are enriched in pro residues. In terms of domain architecture, WW 1 spans 131–164 (PPTEEIWVENKTPDGKVYYYNARTRESAWTKPDG). Residues 184-244 (QAQAQAQAQA…AQAQAQAQVQ (61 aa)) adopt a coiled-coil conformation. Residues 259–333 (STPTTSSPAP…PTATPVQTVP (75 aa)) show a composition bias toward low complexity. The interval 259 to 348 (STPTTSSPAP…TLPPAVPHSV (90 aa)) is disordered. Residues 334 to 344 (QPHPQTLPPAV) show a composition bias toward pro residues. Residues 429 to 462 (ATAVSEWTEYKTADGKTYYYNNRTLESTWEKPQE) enclose the WW 2 domain. Composition is skewed to basic and acidic residues over residues 469 to 481 (LEEKIKEPIKEPS) and 496 to 506 (EEPIKEIKEEP). Positions 469–526 (LEEKIKEPIKEPSEEPLPMETEEEDPKEEPIKEIKEEPKEEEMTEEEKAAQKAKPVAT) are disordered. Glycyl lysine isopeptide (Lys-Gly) (interchain with G-Cter in SUMO2) cross-links involve residues lysine 503 and lysine 507. The 34-residue stretch at 528-561 (PIPGTPWCVVWTGDERVFFYNPTTRLSMWDRPDD) folds into the WW 3 domain. A coiled-coil region spans residues 606 to 655 (AIKEEQELMEEINEDEPVKAKKRKRDDNKDIDSEKEAAMEAEIKAARERA). Residue lysine 608 forms a Glycyl lysine isopeptide (Lys-Gly) (interchain with G-Cter in SUMO2) linkage. The interval 615–640 (EEINEDEPVKAKKRKRDDNKDIDSEK) is disordered. The short motif at 626-630 (KKRKR) is the Nuclear localization signal element. Over residues 630–640 (RDDNKDIDSEK) the composition is skewed to basic and acidic residues. Serine 638 carries the phosphoserine modification. FF domains are found at residues 659-712 (LEAR…YVKT), 725-779 (IMQA…FVAA), and 791-846 (RGEK…YIEK). Position 834 is a phosphoserine (serine 834). The stretch at 844 to 906 (IEKIAKNLDS…EEAIQNFKAL (63 aa)) forms a coiled coil. Residues 870–895 (REREREVQKARSEQTKEIDREREQHK) are disordered. 3 consecutive FF domains span residues 896–952 (REEA…HIEA), 954–1010 (TKKK…YIRD), and 1012–1077 (YITA…YVDD). Phosphoserine is present on serine 933. Residues 1076–1098 (DDLDRRGPPPPPTASEPTRRSTK) form a disordered region.

In terms of assembly, binds formin. Interacts (via the second WW domain) with TREX1 (via proline-rich region). Binds RNA polymerase II, HD and SF1. In terms of tissue distribution, detected in brain neurons.

It is found in the nucleus. Functionally, transcription factor that binds RNA polymerase II and inhibits the elongation of transcripts from target promoters. Regulates transcription elongation in a TATA box-dependent manner. Necessary for TAT-dependent activation of the human immunodeficiency virus type 1 (HIV-1) promoter. This chain is Transcription elongation regulator 1 (TCERG1), found in Homo sapiens (Human).